Consider the following 3526-residue polypeptide: WD repeat and FYVE domain-containing protein 3 (3526 aa).

Serine 1942 and serine 2278 each carry phosphoserine. Residues 2285–2981 form a sufficient for localization to p62 bodies/ALIS region; sequence LTGSRRNRKE…PHPPKRVRSR (697 aa). Disordered stretches follow at residues 2403 to 2429 and 2459 to 2522; these read ETNV…PARY and SSEG…EKTD. Over residues 2468-2477 the composition is skewed to basic and acidic residues; sequence EPEHGEDTIA. Serine 2492 carries the post-translational modification Phosphoserine. Positions 2531-2656 constitute a BEACH-type PH domain; sequence EEGEKIQHMY…IRNKVYQRFL (126 aa). An interaction with SQSTM1 region spans residues 2586-3526; the sequence is MHEPIIPRGA…RGSEDGPRNC (941 aa). Positions 2683-2976 constitute a BEACH domain; sequence GLLSTLVGEK…QLFKKPHPPK (294 aa). The interval 2981–3526 is interaction with ATG5; that stretch reads RLNGDNAGIS…RGSEDGPRNC (546 aa). WD repeat units lie at residues 3077–3115, 3125–3164, 3167–3206, and 3210–3254; these read SEWG…EKAK, GHTD…FLTQ, GHRA…VSVN, and GRSQ…VPET. Positions 3272–3335 are disordered; that stretch reads AQIGQEAQDE…SGSDDSRRWS (64 aa). A compositionally biased stretch (acidic residues) spans 3278–3290; the sequence is AQDEDSSDSEADE. An interaction with GABARAP region spans residues 3313–3363; the sequence is AASCRATAAWCTDSGSDDSRRWSDQLSLDEKDGFIFVNYSEGQTRAHLQGP. A phosphoserine mark is found at serine 3335 and serine 3339. Positions 3346–3349 match the LC3-interacting region (LIR) motif; the sequence is FIFV. Residues 3408 to 3447 form a WD 5 repeat; that stretch reads AHPAEVTALGISKDHSRILVGDSRGRVFSWSVSDQPGRSA. Residues 3454 to 3514 form an FYVE-type zinc finger; it reads DEGGDSCSGC…VCQNCYYNLQ (61 aa). Zn(2+)-binding residues include cysteine 3460, cysteine 3463, cysteine 3476, cysteine 3479, cysteine 3484, cysteine 3487, cysteine 3506, and cysteine 3509.

Directly interacts with ATG5 and associates with the ATG12-ATG5-ATG16L complex. Interacts with p62/SQSTM1; this interaction is required to recruit WDFY3 to cytoplasmic bodies and to PML bodies. Directly interacts with GABARAP, GABARAPL1 and GABARAPL2; the interaction with GABARAP is required for WDFY3 recruitment to MAP1LC3B-positive p62/SQSTM1 bodies. Weakly interacts with MAP1LC3C; this interaction is direct. Does not interact with MAP1LC3A, nor MAP1LC3B. Interacts with TRAF6. In terms of tissue distribution, expressed in osteoclast and their mononuclear precursors (at protein level).

The protein resides in the nucleus membrane. The protein localises to the cytoplasm. It is found in the cytosol. It localises to the nucleus. Its subcellular location is the PML body. The protein resides in the membrane. The protein localises to the perikaryon. It is found in the cell projection. It localises to the axon. In terms of biological role, required for selective macroautophagy (aggrephagy). Acts as an adapter protein by linking specific proteins destined for degradation to the core autophagic machinery members, such as the ATG5-ATG12-ATG16L E3-like ligase, SQSTM1 and LC3. Along with p62/SQSTM1, involved in the formation and autophagic degradation of cytoplasmic ubiquitin-containing inclusions (p62 bodies, ALIS/aggresome-like induced structures). Along with SQSTM1, required to recruit ubiquitinated proteins to PML bodies in the nucleus. Important for normal brain development. Essential for the formation of axonal tracts throughout the brain and spinal cord, including the formation of the major forebrain commissures. Involved in the ability of neural cells to respond to guidance cues. Required for cortical neurons to respond to the trophic effects of netrin-1/NTN1. Regulates Wnt signaling through the removal of DVL3 aggregates, likely in an autophagy-dependent manner. This process may be important for the determination of brain size during embryonic development. May regulate osteoclastogenesis by acting on the TNFSF11/RANKL - TRAF6 pathway. After cytokinetic abscission, involved in midbody remnant degradation. In vitro strongly binds to phosphatidylinositol 3-phosphate (PtdIns3P). This is WD repeat and FYVE domain-containing protein 3 (WDFY3) from Homo sapiens (Human).